Reading from the N-terminus, the 175-residue chain is Flagellar assembly factor FliW (175 aa).

This sequence belongs to the FliW family. Interacts with translational regulator CsrA and flagellin(s).

The protein localises to the cytoplasm. In terms of biological role, acts as an anti-CsrA protein, binds CsrA and prevents it from repressing translation of its target genes, one of which is flagellin. Binds to flagellin and participates in the assembly of the flagellum. This is Flagellar assembly factor FliW from Bdellovibrio bacteriovorus (strain ATCC 15356 / DSM 50701 / NCIMB 9529 / HD100).